The chain runs to 472 residues: 3-isopropylmalate dehydratase large subunit (472 aa).

[4Fe-4S] cluster-binding residues include Cys347, Cys407, and Cys410.

It belongs to the aconitase/IPM isomerase family. LeuC type 1 subfamily. As to quaternary structure, heterodimer of LeuC and LeuD. Requires [4Fe-4S] cluster as cofactor.

The catalysed reaction is (2R,3S)-3-isopropylmalate = (2S)-2-isopropylmalate. The protein operates within amino-acid biosynthesis; L-leucine biosynthesis; L-leucine from 3-methyl-2-oxobutanoate: step 2/4. Catalyzes the isomerization between 2-isopropylmalate and 3-isopropylmalate, via the formation of 2-isopropylmaleate. This chain is 3-isopropylmalate dehydratase large subunit, found in Synechococcus sp. (strain CC9605).